The sequence spans 416 residues: Serine/threonine transporter SstT (416 aa).

Helical transmembrane passes span 15 to 35 (SLVSQILVGLVFGILLAMFMP), 49 to 69 (VGALKAVAPLLVFVLVMAAII), 82 to 102 (ILLLYLLGTFLAAAVAVVASF), 141 to 161 (ALLDANYIGILAWAIGLGIAM), 192 to 212 (LGILGLVASTLAETGFDALFG), 217 to 237 (LVVLIGCMLFIAFVVNPLIVF), 288 to 308 (VSIPLGATINMAGAAITITVL), 316 to 336 (LGMEVDLATAILLSVVATISA), and 363 to 383 (IAMQVVAVGFIIGVLQDSAET).

Belongs to the dicarboxylate/amino acid:cation symporter (DAACS) (TC 2.A.23) family.

It localises to the cell inner membrane. It catalyses the reaction L-serine(in) + Na(+)(in) = L-serine(out) + Na(+)(out). The enzyme catalyses L-threonine(in) + Na(+)(in) = L-threonine(out) + Na(+)(out). In terms of biological role, involved in the import of serine and threonine into the cell, with the concomitant import of sodium (symport system). The polypeptide is Serine/threonine transporter SstT (Aeromonas hydrophila subsp. hydrophila (strain ATCC 7966 / DSM 30187 / BCRC 13018 / CCUG 14551 / JCM 1027 / KCTC 2358 / NCIMB 9240 / NCTC 8049)).